The primary structure comprises 976 residues: MRGARGAWDFLCVLLLLLRVQTGSSQPSVSPGEPSPPSIHPGKSDLIVRVGDEIRLLCTDPGFVKWTFEILDETNENKQNEWITEKAEATNTGKYTCTNKHGLSNSIYVFVRDPAKLFLVDRSLYGKEDNDTLVRCPLTDPEVTNYSLKGCQGKPLPKDLRFIPDPKAGIMIKSVKRAYHRLCLHCSVDQEGKSVLSEKFILKVRPAFKAVPVVSVSKASYLLREGEEFTVTCTIKDVSSSVYSTWKRENSQTKLQEKYNSWHHGDFNYERQATLTISSARVNDSGVFMCYANNTFGSANVTTTLEVVDKGFINIFPMINTTVFVNDGENVDLIVEYEAFPKPEHQQWIYMNRTFTDKWEDYPKSENESNIRYVSELHLTRLKGTEGGTYTFLVSNSDVNAAIAFNVYVNTKPEILTYDRLVNGMLQCVAAGFPEPTIDWYFCPGTEQRCSASVLPVDVQTLNSSGPPFGKLVVQSSIDSSAFKHNGTVECKAYNDVGKTSAYFNFAFKGNNKEQIHPHTLFTPLLIGFVIVAGMMCIIVMILTYKYLQKPMYEVQWKVVEEINGNNYVYIDPTQLPYDHKWEFPRNRLSFGKTLGAGAFGKVVEATAYGLIKSDAAMTVAVKMLKPSAHLTEREALMSELKVLSYLGNHMNIVNLLGACTIGGPTLVITEYCCYGDLLNFLRRKRDSFICSKQEDHAEAALYKNLLHSKESSCSDSTNEYMDMKPGVSYVVPTKADKRRSVRIGSYIERDVTPAIMEDDELALDLEDLLSFSYQVAKGMAFLASKNCIHRDLAARNILLTHGRITKICDFGLARDIKNDSNYVVKGNARLPVKWMAPESIFNCVYTFESDVWSYGIFLWELFSLGSSPYPGMPVDSKFYKMIKEGFRMLSPEHAPAEMYDIMKTCWDADPLKRPTFKQIVQLIEKQISESTNHIYSNLANCSPNRQKPVVDHSVRINSVGSTASSSQPLLVHDDV.

Residues 1–25 (MRGARGAWDFLCVLLLLLRVQTGSS) form the signal peptide. The Extracellular portion of the chain corresponds to 26 to 524 (QPSVSPGEPS…QIHPHTLFTP (499 aa)). Ig-like C2-type domains lie at 27–112 (PSVS…VFVR), 121–205 (DRSL…LKVR), 212–308 (PVVS…LEVV), 317–410 (PMIN…VYVN), and 413–507 (PEIL…FNFA). The cysteines at positions 58 and 97 are disulfide-linked. N-linked (GlcNAc...) asparagine glycosylation is found at N130 and N145. 3 disulfide bridges follow: C136–C186, C151–C183, and C233–C290. 8 N-linked (GlcNAc...) asparagine glycosylation sites follow: N283, N293, N300, N320, N352, N367, N463, and N486. An intrachain disulfide couples C428 to C491. A helical membrane pass occupies residues 525 to 545 (LLIGFVIVAGMMCIIVMILTY). The Cytoplasmic portion of the chain corresponds to 546 to 976 (KYLQKPMYEV…SQPLLVHDDV (431 aa)). 4 positions are modified to phosphotyrosine; by autocatalysis: Y547, Y553, Y568, and Y570. Y568 serves as a coordination point for Mg(2+). The segment at 568–570 (YVY) is important for interaction with phosphotyrosine-binding proteins. Positions 589-937 (LSFGKTLGAG…ISESTNHIYS (349 aa)) constitute a Protein kinase domain. ATP contacts are provided by residues 596–603 (GAGAFGKV), K623, and 671–677 (EYCCYGD). Phosphotyrosine; by autocatalysis occurs at positions 703, 721, and 730. Residues S741 and S746 each carry the phosphoserine; by PKC/PRKCA modification. D792 (proton acceptor) is an active-site residue. Residue R796 coordinates ATP. The Mg(2+) site is built by N797 and D810. Phosphoserine is present on S821. At Y823 the chain carries Phosphotyrosine; by autocatalysis. A Phosphoserine modification is found at S891. A phosphotyrosine; by autocatalysis mark is found at Y900 and Y936. S959 is modified (phosphoserine).

It belongs to the protein kinase superfamily. Tyr protein kinase family. CSF-1/PDGF receptor subfamily. As to quaternary structure, monomer in the absence of bound KITLG/SCF. Homodimer in the presence of bound KITLG/SCF, forming a heterotetramer with two KITLG/SCF molecules. Interacts (via phosphorylated tyrosine residues) with the adapter proteins GRB2 and GRB7 (via SH2 domain), and SH2B2/APS. Interacts (via C-terminus) with MPDZ (via the tenth PDZ domain). Interacts (via phosphorylated tyrosine residues) with PIK3R1 and PIK3 catalytic subunit. Interacts (via phosphorylated tyrosine) with CRK (isoform Crk-II), FYN, SHC1 and MATK/CHK (via SH2 domain). Interacts with LYN and FES/FPS. Interacts (via phosphorylated tyrosine residues) with the protein phosphatases PTPN6/SHP-1 (via SH2 domain), PTPN11/SHP-2 (via SH2 domain) and PTPRU. Interacts with PLCG1. Interacts with DOK1 and TEC. Interacts (KITLG/SCF-bound) with IL1RL1. Interacts with IL1RAP (independent of stimulation with KITLG/SCF). A mast cell-specific KITLG/SCF-induced interleukin-33 signaling complex contains IL1RL1, IL1RAP, KIT and MYD88. In terms of processing, ubiquitinated by SOCS6. KIT is rapidly ubiquitinated after autophosphorylation induced by KITLG/SCF binding, leading to internalization and degradation. Post-translationally, autophosphorylated on tyrosine residues. KITLG/SCF binding enhances autophosphorylation. Isoform 1 shows low levels of tyrosine phosphorylation in the absence of added KITLG/SCF (in vitro). Kinase activity is down-regulated by phosphorylation on serine residues by protein kinase C family members. Phosphorylation at Tyr-568 is required for interaction with PTPN11/SHP-2, CRK (isoform Crk-II) and members of the SRC tyrosine-protein kinase family. Phosphorylation at Tyr-570 is required for interaction with PTPN6/SHP-1. Phosphorylation at Tyr-703, Tyr-823 and Tyr-936 is important for interaction with GRB2. Phosphorylation at Tyr-721 is important for interaction with PIK3R1. Phosphorylation at Tyr-823 and Tyr-936 is important for interaction with GRB7. In testis, detected in spermatogonia in the basal layer and in interstitial Leydig cells but not in Sertoli cells or spermatocytes inside the seminiferous tubules (at protein level). Expression is maintained in ejaculated spermatozoa (at protein level).

The protein resides in the cell membrane. It localises to the cytoplasm. It carries out the reaction L-tyrosyl-[protein] + ATP = O-phospho-L-tyrosyl-[protein] + ADP + H(+). Present in an inactive conformation in the absence of bound ligand. KITLG/SCF binding leads to dimerization and activation by autophosphorylation on tyrosine residues. Activity is down-regulated by PRKCA-mediated phosphorylation on serine residues. Inhibited by imatinib/STI-571 (Gleevec) and sunitinib; these compounds maintain the kinase in an inactive conformation. In terms of biological role, tyrosine-protein kinase that acts as a cell-surface receptor for the cytokine KITLG/SCF and plays an essential role in the regulation of cell survival and proliferation, hematopoiesis, stem cell maintenance, gametogenesis, mast cell development, migration and function, and in melanogenesis. In response to KITLG/SCF binding, KIT can activate several signaling pathways. Phosphorylates PIK3R1, PLCG1, SH2B2/APS and CBL. Activates the AKT1 signaling pathway by phosphorylation of PIK3R1, the regulatory subunit of phosphatidylinositol 3-kinase. Activated KIT also transmits signals via GRB2 and activation of RAS, RAF1 and the MAP kinases MAPK1/ERK2 and/or MAPK3/ERK1. Promotes activation of STAT family members STAT1, STAT3, STAT5A and STAT5B. Activation of PLCG1 leads to the production of the cellular signaling molecules diacylglycerol and inositol 1,4,5-trisphosphate. KIT signaling is modulated by protein phosphatases, and by rapid internalization and degradation of the receptor. Activated KIT promotes phosphorylation of the protein phosphatases PTPN6/SHP-1 and PTPRU, and of the transcription factors STAT1, STAT3, STAT5A and STAT5B. Promotes phosphorylation of PIK3R1, CBL, CRK (isoform Crk-II), LYN, MAPK1/ERK2 and/or MAPK3/ERK1, PLCG1, SRC and SHC1. This chain is Mast/stem cell growth factor receptor Kit (KIT), found in Homo sapiens (Human).